Here is a 483-residue protein sequence, read N- to C-terminus: Transmembrane protein 39B (483 aa).

N-linked (GlcNAc...) asparagine glycosylation is present at Asn-9. 7 helical membrane passes run 76–96 (HLLF…VHYI), 114–134 (TSLN…IVLA), 158–182 (LLVA…ILLF), 187–207 (FFNL…LQLG), 281–301 (EVLL…VWFV), 414–434 (VLNI…YSLL), and 440–460 (HHTI…FKLL).

This sequence belongs to the TMEM39 family.

It localises to the endoplasmic reticulum membrane. Its function is as follows. May protect the cells against DNA damage caused by exposure to the cold-warming stress and facilitates tissue damage repair during the recovery phase. This chain is Transmembrane protein 39B, found in Xenopus tropicalis (Western clawed frog).